The chain runs to 191 residues: uncharacterized protein (191 aa).

2 disordered regions span residues 1–42 (MSEE…DADA) and 145–191 (QNQE…IDLD). Composition is skewed to basic and acidic residues over residues 11 to 26 (PRPD…RATG) and 147 to 178 (QERR…RDEG).

It may form a heterotetramer of two glucokinase subunits (glk) with two ORF2 proteins.

Functionally, may be involved in glucose transport or metabolism. This is an uncharacterized protein from Streptomyces coelicolor (strain ATCC BAA-471 / A3(2) / M145).